The sequence spans 214 residues: ATP synthase subunit a (214 aa).

Helical transmembrane passes span 9-29 (LDGM…VFMI), 64-84 (IMMV…TYGI), 88-108 (LWVN…SGYI), 121-141 (SGAP…SIMI), 150-170 (LVAN…VLSS), and 182-202 (LIMV…AYIF).

The protein belongs to the ATPase A chain family. In terms of assembly, F-type ATPases have 2 components, CF(1) - the catalytic core - and CF(0) - the membrane proton channel. CF(1) has five subunits: alpha(3), beta(3), gamma(1), delta(1), epsilon(1). CF(0) has three main subunits: a, b and c.

Its subcellular location is the mitochondrion inner membrane. Its function is as follows. Mitochondrial membrane ATP synthase (F(1)F(0) ATP synthase or Complex V) produces ATP from ADP in the presence of a proton gradient across the membrane which is generated by electron transport complexes of the respiratory chain. F-type ATPases consist of two structural domains, F(1) - containing the extramembraneous catalytic core and F(0) - containing the membrane proton channel, linked together by a central stalk and a peripheral stalk. During catalysis, ATP synthesis in the catalytic domain of F(1) is coupled via a rotary mechanism of the central stalk subunits to proton translocation. Key component of the proton channel; it may play a direct role in the translocation of protons across the membrane. The protein is ATP synthase subunit a (ATP6) of Albinaria caerulea (Land snail).